The primary structure comprises 74 residues: Sec-independent protein translocase protein TatA (74 aa).

Residues 1-21 (MGGISIWQLLIIVAIVVLLFG) traverse the membrane as a helical segment. The disordered stretch occupies residues 45–74 (EEPKDAEFKSLDKAENTAQTKKEEKEKEQA).

This sequence belongs to the TatA/E family. As to quaternary structure, the Tat system comprises two distinct complexes: a TatABC complex, containing multiple copies of TatA, TatB and TatC subunits, and a separate TatA complex, containing only TatA subunits. Substrates initially bind to the TatABC complex, which probably triggers association of the separate TatA complex to form the active translocon.

Its subcellular location is the cell inner membrane. Functionally, part of the twin-arginine translocation (Tat) system that transports large folded proteins containing a characteristic twin-arginine motif in their signal peptide across membranes. TatA could form the protein-conducting channel of the Tat system. This is Sec-independent protein translocase protein TatA from Actinobacillus succinogenes (strain ATCC 55618 / DSM 22257 / CCUG 43843 / 130Z).